The chain runs to 763 residues: Disintegrin and metalloproteinase domain-containing protein 29 (763 aa).

The N-terminal stretch at M1 to A31 is a signal peptide. A propeptide spanning residues G32–W200 is cleaved from the precursor. N-linked (GlcNAc...) asparagine glycans are attached at residues N164, N177, and N223. Residues W201–Y684 lie on the Extracellular side of the membrane. Residues K205–Y396 enclose the Peptidase M12B domain. Disulfide bonds link C313/C390, C353/C375, and C355/C360. N-linked (GlcNAc...) asparagine glycans are attached at residues N374, N424, N434, N475, and N584. The 87-residue stretch at R403 to D489 folds into the Disintegrin domain. Residues C461 and C481 are joined by a disulfide bond. 3 disulfides stabilise this stretch: C631–C642, C636–C648, and C650–C659. Residues C631–M660 form the EGF-like domain. The chain crosses the membrane as a helical span at residues L685 to F705. Topologically, residues N706–N763 are cytoplasmic. The segment at R712–N763 is disordered. Positions R751–N763 are enriched in polar residues.

The protein localises to the membrane. May be involved in spermatogenesis and fertilization. Seems to be a non catalytic metalloprotease-like protein. This chain is Disintegrin and metalloproteinase domain-containing protein 29 (Adam29), found in Mus musculus (Mouse).